The chain runs to 388 residues: L-lactate dehydrogenase (388 aa).

An FMN hydroxy acid dehydrogenase domain is found at 1–380 (MIISSSSDYR…SRDSLVREIE (380 aa)). Residue tyrosine 24 participates in substrate binding. The FMN site is built by serine 106 and glutamine 127. Tyrosine 129 provides a ligand contact to substrate. Threonine 155 contributes to the FMN binding site. Arginine 164 lines the substrate pocket. Lysine 251 is a binding site for FMN. Histidine 275 (proton acceptor) is an active-site residue. Arginine 278 is a substrate binding site. 306–330 (DSGIRSGLDVVRMLAQGADGVLLGR) provides a ligand contact to FMN.

The protein belongs to the FMN-dependent alpha-hydroxy acid dehydrogenase family. FMN is required as a cofactor.

Its subcellular location is the cell inner membrane. It carries out the reaction (S)-lactate + A = pyruvate + AH2. Catalyzes the conversion of L-lactate to pyruvate. Is coupled to the respiratory chain. This Xanthobacter autotrophicus (strain ATCC BAA-1158 / Py2) protein is L-lactate dehydrogenase.